Here is a 4513-residue protein sequence, read N- to C-terminus: Dynein-1-beta heavy chain, flagellar inner arm I1 complex (4513 aa).

The tract at residues 1-1806 (MEPGDEGKGH…IVKQVLSVFY (1806 aa)) is stem. 3 coiled-coil regions span residues 192 to 223 (KAAA…NQQD), 1544 to 1577 (TAQG…RQQF), and 1704 to 1727 (THEC…LKKK). AAA stretches follow at residues 1807-2028 (YGYE…PIAR), 2089-2350 (RAIE…VPEN), 2458-2706 (FKPA…IIQG), and 2808-3059 (DYAL…LKRR). Residues 1845–1852 (GPAGTGKT), 2127–2134 (GRTGSGKS), 2497–2504 (GNVGVGKT), and 2848–2855 (GVGGSGRK) each bind ATP. 3 coiled-coil regions span residues 3107–3193 (AAMK…LTKK), 3301–3384 (KRAK…SISE), and 3499–3519 (RLKV…NAIQ). Positions 3107–3384 (AAMKKVAEEK…RVRWEASISE (278 aa)) are stalk. 2 AAA regions span residues 3443 to 3674 (LANP…EVNA) and 3890 to 4109 (ATTY…LLKS).

As to quaternary structure, the I1 inner arm complex (also known as the f dynein complex) is a two-headed isoform composed of two heavy chains (1-alpha and 1-beta), three intermediate chains and three light chains. I1 occupies a specific position proximal to the first radial spoke and repeats every 96 nm along the length of the axoneme.

Its subcellular location is the cell projection. It is found in the cilium. It localises to the flagellum. The protein localises to the cytoplasm. The protein resides in the cytoskeleton. Its subcellular location is the flagellum axoneme. Functionally, force generating protein of eukaryotic cilia and flagella. Produces force towards the minus ends of microtubules. Dynein has ATPase activity; the force-producing power stroke is thought to occur on release of ADP. Required for assembly of the I1 inner arm complex and its targeting to the appropriate axoneme location. Also required for phototaxis. The polypeptide is Dynein-1-beta heavy chain, flagellar inner arm I1 complex (DHC10) (Chlamydomonas reinhardtii (Chlamydomonas smithii)).